The chain runs to 406 residues: Acetylornithine/succinyldiaminopimelate aminotransferase (406 aa).

Residues 108–109 and phenylalanine 141 each bind pyridoxal 5'-phosphate; that span reads GT. A N(2)-acetyl-L-ornithine-binding site is contributed by arginine 144. 226-229 is a pyridoxal 5'-phosphate binding site; the sequence is DEVQ. An N6-(pyridoxal phosphate)lysine modification is found at lysine 255. A N(2)-acetyl-L-ornithine-binding site is contributed by serine 283. Threonine 284 serves as a coordination point for pyridoxal 5'-phosphate.

The protein belongs to the class-III pyridoxal-phosphate-dependent aminotransferase family. ArgD subfamily. Homodimer. Requires pyridoxal 5'-phosphate as cofactor.

Its subcellular location is the cytoplasm. It catalyses the reaction N(2)-acetyl-L-ornithine + 2-oxoglutarate = N-acetyl-L-glutamate 5-semialdehyde + L-glutamate. It carries out the reaction N-succinyl-(2S,6S)-2,6-diaminopimelate + 2-oxoglutarate = (S)-2-succinylamino-6-oxoheptanedioate + L-glutamate. It functions in the pathway amino-acid biosynthesis; L-arginine biosynthesis; N(2)-acetyl-L-ornithine from L-glutamate: step 4/4. The protein operates within amino-acid biosynthesis; L-lysine biosynthesis via DAP pathway; LL-2,6-diaminopimelate from (S)-tetrahydrodipicolinate (succinylase route): step 2/3. Its function is as follows. Involved in both the arginine and lysine biosynthetic pathways. The protein is Acetylornithine/succinyldiaminopimelate aminotransferase of Escherichia coli O6:H1 (strain CFT073 / ATCC 700928 / UPEC).